The following is a 619-amino-acid chain: MAGPGVPGAPAARWKRHIVRQLRLRDRTQKALFLELVPAYNHLLEKAELLDKFSKKLQPEPNSVTPTTHQGPWEESELDSDQVPSLVALRVKWQEEEEGLRLVCGEMAYQVVEKGAALGTLESELQQRQSRLAALEARVAQLREARAQQAQQVEEWRAQNAVQRAAYEALRAHVGLREAALRRLQEEARDLLERLVQRKARAAAERNLRNERRERAKQARVSQELKKAAKRTVSISEGPDTLGDGMRERRETLALAPEPEPLEKEACEKWKRPFRSASATSLTLSHCVDVVKGLLDFKKRRGHSIGGAPEQRYQIIPVCVAARLPTRAQDVLDAHLSEVNAVRFGPNSSLLATGGADRLIHLWNVVGSRLEANQTLEGAGGSITSVDFDPSGYQVLAATYNQAAQLWKVGEAQSKETLSGHKDKVTAAKFKLTRHQAVTGSRDRTVKEWDLGRAYCSRTINVLSYCNDVVCGDHIIISGHNDQKIRFWDSRGPHCTQVIPVQGRVTSLSLSHDQLHLLSCSRDNTLKVIDLRVSNIRQVFRADGFKCGSDWTKAVFSPDRSYALAGSCDGALYIWDVDTGKLESRLQGPHCAAVNAVAWCYSGSHMVSVDQGRKVVLWQ.

Residues 57–78 (LQPEPNSVTPTTHQGPWEESEL) form a disordered region. Residues 60–70 (EPNSVTPTTHQ) show a composition bias toward polar residues. Positions 116–227 (AALGTLESEL…QARVSQELKK (112 aa)) form a coiled coil. WD repeat units lie at residues 334–373 (AHLS…LEAN), 378–417 (GAGG…SKET), 420–454 (GHKD…LGRA), 455–498 (YCSR…CTQV), 500–539 (PVQG…IRQV), 546–585 (KCGS…LESR), and 589–619 (PHCA…VLWQ).

The protein belongs to the WD repeat ATG16 family. In terms of assembly, homooligomer. Heterooligomer with ATG16L1. Interacts with ATG5. Self-oligomerizes to form a 800-kDa complex composed of ATG12-ATG5 and ATG16L2. Interacts with RAB33B.

The protein resides in the cytoplasm. It localises to the cytosol. Its function is as follows. May play a role in regulating epithelial homeostasis in an ATG16L1-dependent manner. The polypeptide is Protein Atg16l2 (ATG16L2) (Homo sapiens (Human)).